Reading from the N-terminus, the 448-residue chain is Lipoamide acyltransferase component of branched-chain alpha-keto acid dehydrogenase complex, mitochondrial (448 aa).

One can recognise a Lipoyl-binding domain in the interval 30-105; that stretch reads VVQFKLSDIG…RVGQALIDVE (76 aa). Position 71 is an N6-lipoyllysine (Lys71). 2 disordered regions span residues 108 to 146 and 191 to 211; these read GNVEEPEQPKKEAASSSPEAPKSSAPKAPESAHSEGKVL and TSGSTNIRTTHQAPQPSSKSY. The segment covering 121 to 136 has biased composition (low complexity); sequence ASSSPEAPKSSAPKAP. The Peripheral subunit-binding (PSBD) domain occupies 146–183; sequence LATPAVRRIAIENKIKLAEVRGTGKDGRVLKEDVLKFL. Residues 191–210 show a composition bias toward polar residues; it reads TSGSTNIRTTHQAPQPSSKS. CoA contacts are provided by Arg257, Ser272, Asp315, Ser365, Asn366, Gly390, and Ile392. Catalysis depends on residues His418 and Asp422.

It belongs to the 2-oxoacid dehydrogenase family. The cofactor is (R)-lipoate. In terms of tissue distribution, ubiquitously expressed.

Its subcellular location is the mitochondrion matrix. It localises to the cytoplasm. The protein resides in the cytosol. It is found in the cell projection. The protein localises to the dendrite. Its subcellular location is the cilium. It carries out the reaction N(6)-[(R)-dihydrolipoyl]-L-lysyl-[protein] + 2-methylpropanoyl-CoA = N(6)-[(R)-S(8)-2-methylpropanoyldihydrolipoyl]-L-lysyl-[protein] + CoA. In terms of biological role, the branched-chain alpha-keto dehydrogenase complex catalyzes the overall conversion of alpha-keto acids to acyl-CoA and CO(2). It contains multiple copies of three enzymatic components: branched-chain alpha-keto acid decarboxylase (E1), lipoamide acyltransferase (E2) and lipoamide dehydrogenase (E3). Within this complex, the catalytic function of this enzyme is to accept, and to transfer to coenzyme A, acyl groups that are generated by the branched-chain alpha-keto acid decarboxylase component. Required for the catabolism of branched-chain amino acids and the subsequent synthesis of monomethyl branched-chain fatty acids, which are important for regulating postembryonic growth. This Caenorhabditis elegans protein is Lipoamide acyltransferase component of branched-chain alpha-keto acid dehydrogenase complex, mitochondrial.